The sequence spans 127 residues: Fluoride-specific ion channel FluC (127 aa).

4 helical membrane-spanning segments follow: residues P4 to L24, G36 to A56, L68 to V88, and W98 to I118. Positions 75 and 78 each coordinate Na(+).

It belongs to the fluoride channel Fluc/FEX (TC 1.A.43) family.

Its subcellular location is the cell inner membrane. It catalyses the reaction fluoride(in) = fluoride(out). With respect to regulation, na(+) is not transported, but it plays an essential structural role and its presence is essential for fluoride channel function. Functionally, fluoride-specific ion channel. Important for reducing fluoride concentration in the cell, thus reducing its toxicity. The sequence is that of Fluoride-specific ion channel FluC from Nitrosomonas europaea (strain ATCC 19718 / CIP 103999 / KCTC 2705 / NBRC 14298).